We begin with the raw amino-acid sequence, 125 residues long: Small ribosomal subunit protein bS6m (125 aa).

It belongs to the bacterial ribosomal protein bS6 family. In terms of assembly, component of the mitochondrial ribosome small subunit (28S) which comprises a 12S rRNA and about 30 distinct proteins.

It localises to the mitochondrion. This chain is Small ribosomal subunit protein bS6m (Mrps6), found in Mus musculus (Mouse).